Here is a 160-residue protein sequence, read N- to C-terminus: Cytochrome b6-f complex subunit 4 (160 aa).

3 consecutive transmembrane segments (helical) span residues 36–56 (ILFT…GLAI), 95–115 (LLGI…PFIE), and 131–151 (AVFL…CFPI).

It belongs to the cytochrome b family. PetD subfamily. As to quaternary structure, the 4 large subunits of the cytochrome b6-f complex are cytochrome b6, subunit IV (17 kDa polypeptide, PetD), cytochrome f and the Rieske protein, while the 4 small subunits are PetG, PetL, PetM and PetN. The complex functions as a dimer.

It is found in the cellular thylakoid membrane. In terms of biological role, component of the cytochrome b6-f complex, which mediates electron transfer between photosystem II (PSII) and photosystem I (PSI), cyclic electron flow around PSI, and state transitions. The chain is Cytochrome b6-f complex subunit 4 from Picosynechococcus sp. (strain ATCC 27264 / PCC 7002 / PR-6) (Agmenellum quadruplicatum).